The primary structure comprises 212 residues: N-(5'-phosphoribosyl)anthranilate isomerase (212 aa).

The protein belongs to the TrpF family.

It catalyses the reaction N-(5-phospho-beta-D-ribosyl)anthranilate = 1-(2-carboxyphenylamino)-1-deoxy-D-ribulose 5-phosphate. It functions in the pathway amino-acid biosynthesis; L-tryptophan biosynthesis; L-tryptophan from chorismate: step 3/5. The chain is N-(5'-phosphoribosyl)anthranilate isomerase from Roseiflexus castenholzii (strain DSM 13941 / HLO8).